Consider the following 143-residue polypeptide: Large ribosomal subunit protein uL11 (143 aa).

Belongs to the universal ribosomal protein uL11 family. As to quaternary structure, part of the ribosomal stalk of the 50S ribosomal subunit. Interacts with L10 and the large rRNA to form the base of the stalk. L10 forms an elongated spine to which L12 dimers bind in a sequential fashion forming a multimeric L10(L12)X complex. One or more lysine residues are methylated.

Its function is as follows. Forms part of the ribosomal stalk which helps the ribosome interact with GTP-bound translation factors. The sequence is that of Large ribosomal subunit protein uL11 from Leifsonia xyli subsp. xyli (strain CTCB07).